The following is a 703-amino-acid chain: Ubiquitin-like modifier-activating enzyme ATG7 (703 aa).

An N-acetylalanine modification is found at alanine 2. Residues 15–17 (FAP) carry the FAP motif motif. Lysine 45 is covalently cross-linked (Glycyl lysine isopeptide (Lys-Gly) (interchain with G-Cter in ubiquitin)). Cysteine 572 serves as the catalytic Glycyl thioester intermediate. Serine 698 is subject to Phosphoserine.

The protein belongs to the ATG7 family. As to quaternary structure, homodimer. Interacts with ATG3; this interaction is essential for the transfer of ATG8-like proteins's thioester from ATG7 to ATG3 and plays a role in the conjugation of ATG12 to ATG5. Interacts with ATG12. Forms intermediate conjugates with GABARAPL1. Forms intermediate conjugates with ATG8-like proteins such as GABARAP, GABARAPL2 or MAP1LC3A. Interacts with EP300 acetyltransferase. Interacts with FOXO1. Post-translationally, acetylated by EP300. In terms of processing, polyubiquitinated on Lys-45 via 'Lys-63'-linked ubiquitin by TRIM32; this modification positiely regulates ATG8 and ATG12 activating enzyme activity leading to initiation of autophagy under metabolic stress. In terms of tissue distribution, widely expressed, especially in kidney, liver, lymph nodes and bone marrow.

It is found in the cytoplasm. Its subcellular location is the preautophagosomal structure. In terms of biological role, E1-like activating enzyme involved in the 2 ubiquitin-like systems required for cytoplasm to vacuole transport (Cvt) and autophagy. Activates ATG12 for its conjugation with ATG5 as well as the ATG8 family proteins for their conjugation with phosphatidylethanolamine. Both systems are needed for the ATG8 association to Cvt vesicles and autophagosomes membranes. Required for autophagic death induced by caspase-8 inhibition. Facilitates LC3-I lipidation with phosphatidylethanolamine to form LC3-II which is found on autophagosomal membranes. Required for mitophagy which contributes to regulate mitochondrial quantity and quality by eliminating the mitochondria to a basal level to fulfill cellular energy requirements and preventing excess ROS production. Modulates p53/TP53 activity to regulate cell cycle and survival during metabolic stress. Also plays a key role in the maintenance of axonal homeostasis, the prevention of axonal degeneration, the maintenance of hematopoietic stem cells, the formation of Paneth cell granules, as well as in adipose differentiation. Plays a role in regulating the liver clock and glucose metabolism by mediating the autophagic degradation of CRY1 (clock repressor) in a time-dependent manner. This chain is Ubiquitin-like modifier-activating enzyme ATG7, found in Homo sapiens (Human).